The primary structure comprises 127 residues: Large ribosomal subunit protein bL12 (127 aa).

The protein belongs to the bacterial ribosomal protein bL12 family. In terms of assembly, homodimer. Part of the ribosomal stalk of the 50S ribosomal subunit. Forms a multimeric L10(L12)X complex, where L10 forms an elongated spine to which 2 to 4 L12 dimers bind in a sequential fashion. Binds GTP-bound translation factors.

In terms of biological role, forms part of the ribosomal stalk which helps the ribosome interact with GTP-bound translation factors. Is thus essential for accurate translation. The sequence is that of Large ribosomal subunit protein bL12 from Thiobacillus denitrificans (strain ATCC 25259 / T1).